Reading from the N-terminus, the 501-residue chain is Aspartate--tRNA ligase, cytoplasmic (501 aa).

T52 is modified (phosphothreonine). An N6-acetyllysine modification is found at K74. L-aspartate is bound at residue E229. S249 carries the post-translational modification Phosphoserine. The interval 251–254 is aspartate; sequence QLYK. R273 provides a ligand contact to L-aspartate. Residues 273–275 and 281–283 each bind ATP; these read RAE and RHL. At K374 the chain carries N6-acetyllysine. E424 lines the ATP pocket. S427 and R431 together coordinate L-aspartate. 472-475 is an ATP binding site; it reads GLER.

Belongs to the class-II aminoacyl-tRNA synthetase family. Type 2 subfamily. Homodimer. Part of a multisubunit complex that groups tRNA ligases for Arg (RARS1), Asp (DARS1), Gln (QARS1), Ile (IARS1), Leu (LARS1), Lys (KARS1), Met (MARS1) the bifunctional ligase for Glu and Pro (EPRS1) and the auxiliary subunits AIMP1/p43, AIMP2/p38 and EEF1E1/p18.

Its subcellular location is the cytoplasm. The catalysed reaction is tRNA(Asp) + L-aspartate + ATP = L-aspartyl-tRNA(Asp) + AMP + diphosphate. In terms of biological role, catalyzes the specific attachment of an amino acid to its cognate tRNA in a 2 step reaction: the amino acid (AA) is first activated by ATP to form AA-AMP and then transferred to the acceptor end of the tRNA. This is Aspartate--tRNA ligase, cytoplasmic (Dars1) from Rattus norvegicus (Rat).